The primary structure comprises 167 residues: Photosystem II extrinsic protein V (167 aa).

A signal peptide spans 1 to 30; the sequence is MVFKTLRRTLWLTLAALLAVFQFNLGAAQA. 4 residues coordinate heme c: C67, C70, H71, and H122.

It belongs to the cytochrome c family. PsbV subfamily. In terms of assembly, PSII is composed of 1 copy each of membrane proteins PsbA, PsbB, PsbC, PsbD, PsbE, PsbF, PsbH, PsbI, PsbJ, PsbK, PsbL, PsbM, PsbT, PsbX, PsbY, PsbZ, Psb30/Ycf12, peripheral proteins PsbO, CyanoQ (PsbQ), PsbU, PsbV and a large number of cofactors. It forms dimeric complexes. Heme c is required as a cofactor.

It is found in the cellular thylakoid membrane. One of the extrinsic, lumenal subunits of photosystem II (PSII). PSII is a light-driven water plastoquinone oxidoreductase, using light energy to abstract electrons from H(2)O, generating a proton gradient subsequently used for ATP formation. The extrinsic proteins stabilize the structure of photosystem II oxygen-evolving complex (OEC), the ion environment of oxygen evolution and protect the OEC against heat-induced inactivation. Low-potential cytochrome c that plays a role in the OEC of PSII. This Synechococcus elongatus (strain ATCC 33912 / PCC 7942 / FACHB-805) (Anacystis nidulans R2) protein is Photosystem II extrinsic protein V.